The following is a 68-amino-acid chain: Large ribosomal subunit protein eL24 (68 aa).

Zn(2+)-binding residues include Cys7, Cys10, Cys33, and Cys37. The segment at 7–37 adopts a C4-type zinc-finger fold; sequence CSYCGREFEPGTGKMFVRNDGRVLFFCSSKC.

This sequence belongs to the eukaryotic ribosomal protein eL24 family. As to quaternary structure, part of the 50S ribosomal subunit. Forms a cluster with proteins L3 and L14. Requires Zn(2+) as cofactor.

In terms of biological role, binds to the 23S rRNA. The polypeptide is Large ribosomal subunit protein eL24 (Thermococcus gammatolerans (strain DSM 15229 / JCM 11827 / EJ3)).